Consider the following 276-residue polypeptide: Polyamine aminopropyltransferase (276 aa).

One can recognise a PABS domain in the interval 3–236; that stretch reads ELWYTEKQTK…GLWTFTIGSK (234 aa). Glutamine 32 contacts S-methyl-5'-thioadenosine. Spermidine is bound by residues histidine 63 and aspartate 87. S-methyl-5'-thioadenosine contacts are provided by residues aspartate 107 and 138-139; that span reads DG. Residue aspartate 156 is the Proton acceptor of the active site. Residue 156 to 159 coordinates spermidine; it reads DSTE. An S-methyl-5'-thioadenosine-binding site is contributed by proline 163.

The protein belongs to the spermidine/spermine synthase family. Homodimer or homotetramer.

It is found in the cytoplasm. The catalysed reaction is S-adenosyl 3-(methylsulfanyl)propylamine + putrescine = S-methyl-5'-thioadenosine + spermidine + H(+). The protein operates within amine and polyamine biosynthesis; spermidine biosynthesis; spermidine from putrescine: step 1/1. In terms of biological role, involved in the cell growth and proliferation. Catalyzes the irreversible transfer of a propylamine group from the amino donor S-adenosylmethioninamine (decarboxy-AdoMet) to putrescine (1,4-diaminobutane) to yield spermidine. This chain is Polyamine aminopropyltransferase, found in Bacillus subtilis (strain 168).